A 126-amino-acid polypeptide reads, in one-letter code: Methylglyoxal synthase (126 aa).

In terms of domain architecture, MGS-like spans 1–126 (MAGSKCLALI…AIKLLPTLEA (126 aa)). Substrate-binding positions include H12, K16, 38–41 (TGTT), and 59–60 (SG). Residue D65 is the Proton donor/acceptor of the active site. H92 serves as a coordination point for substrate.

The protein belongs to the methylglyoxal synthase family.

It carries out the reaction dihydroxyacetone phosphate = methylglyoxal + phosphate. Functionally, catalyzes the formation of methylglyoxal from dihydroxyacetone phosphate. The sequence is that of Methylglyoxal synthase from Rhizobium etli (strain ATCC 51251 / DSM 11541 / JCM 21823 / NBRC 15573 / CFN 42).